The following is a 352-amino-acid chain: C-C chemokine receptor type 5 (352 aa).

Residues 1–30 lie on the Extracellular side of the membrane; the sequence is MDYQVSSPTYDIDYYTSEPCQKVNVKQIAA. Y3 is subject to Sulfotyrosine. 2 O-linked (GalNAc...) serine glycosylation sites follow: S6 and S7. Y10, Y14, and Y15 each carry sulfotyrosine. Intrachain disulfides connect C20-C269 and C101-C178. Residues 31–58 form a helical membrane-spanning segment; sequence RLLPPLYSLVFIFGFVGNILVVLILINC. Over 59–68 the chain is Cytoplasmic; the sequence is KRLKSMTDIY. Residues 69–89 form a helical membrane-spanning segment; the sequence is LLNLAISDLFFLLTVPFWAHY. The Extracellular segment spans residues 90–102; it reads AAAQWDFGNTMCQ. The chain crosses the membrane as a helical span at residues 103–124; it reads LLTGLYFIGFFSGIFFIILLTI. Topologically, residues 125–141 are cytoplasmic; it reads DRYLAIVHAVFALKART. A helical transmembrane segment spans residues 142 to 166; the sequence is VTFGVVTSVITWVVAVFASLPGIIF. The Extracellular portion of the chain corresponds to 167–198; it reads TRSQREGLHYTCSSHFPYSQYQFWKNFQTLKI. A helical membrane pass occupies residues 199 to 218; sequence VILGLVLPLLVMVICYSGIL. Residues 219–235 are Cytoplasmic-facing; it reads KTLLRCRNEKKRHRAVR. Residues 236–260 traverse the membrane as a helical segment; the sequence is LIFTIMIVYFLFWAPYNIVLLLNTF. At 261 to 277 the chain is on the extracellular side; it reads QEFFGLNNCSSSNRLDQ. Residues 278 to 301 traverse the membrane as a helical segment; that stretch reads AMQVTETLGMTHCCINPIIYAFVG. Residues 302–352 are Cytoplasmic-facing; that stretch reads EKFRNYLLVFFQKHIAKRFCKCCSIFQQEAPERASSVYTRSTGEQETSVGL. S-palmitoyl cysteine attachment occurs at residues C321, C323, and C324. Residues S336, S337, S342, and S349 each carry the phosphoserine; by BARK1 modification.

The protein belongs to the G-protein coupled receptor 1 family. As to quaternary structure, interacts with PRAF2. Efficient ligand binding to CCL3/MIP-1alpha and CCL4/MIP-1beta requires sulfation, O-glycosylation and sialic acid modifications. Glycosylation on Ser-6 is required for efficient binding of CCL4. Interacts with GRK2. Interacts with ARRB1 and ARRB2. Interacts with CNIH4. Interacts with S100A4; this interaction stimulates T-lymphocyte chemotaxis. Post-translationally, sulfated on at least 2 of the N-terminal tyrosines. Sulfation is required for efficient binding of the chemokines, CCL3 and CCL4. In terms of processing, palmitoylation in the C-terminal is important for cell surface expression. Phosphorylation on serine residues in the C-terminal is stimulated by binding CC chemokines especially by APO-RANTES. Post-translationally, O-glycosylated, but not N-glycosylated. Ser-6 appears to be the major site even if Ser-7 may be also O-glycosylated. Also sialylated glycans present which contribute to chemokine binding. Thr-16 and Ser-17 may also be glycosylated and, if so, with small moieties such as a T-antigen.

The protein localises to the cell membrane. Receptor for a number of inflammatory CC-chemokines including CCL3/MIP-1-alpha, CCL4/MIP-1-beta and RANTES and subsequently transduces a signal by increasing the intracellular calcium ion level. May play a role in the control of granulocytic lineage proliferation or differentiation. Participates in T-lymphocyte migration to the infection site by acting as a chemotactic receptor. This is C-C chemokine receptor type 5 (CCR5) from Trachypithecus francoisi (Francois' leaf monkey).